The sequence spans 310 residues: MKGQQKTAETEEGTVQIQEGAVATGEDPTSVAIASIQSAATFPDPNVKYVFRTENGGQVMYRVIQVSEGQLDGQTEGSGAISGYPATQSMTQAVIQGAFTSDDAVDTEGAAAETHYTYFPSTAVGDGSGGTTSGSTTAVVTTQGSEALLGQATPPSTGQFFVMMSPQEVLQGGSQRSIAPRTHPYSPKSEAPRTTRDEKRRAQHNEVERRRRDKINNWIVQLSKIIPDCSMESTKSGQSKGGILSKACDYIQELRQSNHRLSEELQGLDQLQLDNDVLRQQVEDLKNKNLLLRAQLRHHGLEVVIKNDSN.

Polar residues predominate over residues 1–17 (MKGQQKTAETEEGTVQI). 2 disordered regions span residues 1–26 (MKGQ…ATGE) and 171–209 (QGGS…EVER). Residues 190-209 (EAPRTTRDEKRRAQHNEVER) show a composition bias toward basic and acidic residues. The region spanning 199–254 (KRRAQHNEVERRRRDKINNWIVQLSKIIPDCSMESTKSGQSKGGILSKACDYIQEL) is the bHLH domain. Positions 271–292 (LQLDNDVLRQQVEDLKNKNLLL) are leucine-zipper. A Glycyl lysine isopeptide (Lys-Gly) (interchain with G-Cter in SUMO2) cross-link involves residue Lys-306.

In terms of assembly, efficient DNA binding requires dimerization with another bHLH protein. Binds DNA as a homodimer or a heterodimer (USF1/USF2).

Its subcellular location is the nucleus. In terms of biological role, transcription factor that binds to a symmetrical DNA sequence (E-boxes) (5'-CACGTG-3') that is found in a variety of viral and cellular promoters. The protein is Upstream stimulatory factor 1 (Usf1) of Mus musculus (Mouse).